The sequence spans 340 residues: MAERYISQRHWSQLPPEEQIRVWEDYEAGRATTFLVEPERKRTKRRRGEHSTKPKCENPTWYRPARYKALSGQLGHAYNRLVKKDPVTGEQSLRMHMSRHPFYVQKRTFAGRKYAFRPEKQRLLDAVWPVLVSFSDAGTHTVGMSVSRLAKEISPKDSKGKVIPELEVTVSRLSRLLAEQVRFGVLGMSEETMWDRETRQRLPRYVWITPAGWQMLGVDMVKLHEQQQKRLRESEIRQQLIREGVLREDEDISVHAARKRWYLQRSQDALKHRRAKAAARKRANLLKKLPADQQIYEMSQHILKRMPPDEAYWCTPERLQQLAIRELYQLELTLAAPPPH.

The interval 38–58 (PERKRTKRRRGEHSTKPKCEN) is disordered.

The protein is Replication initiation protein (repA1) of Escherichia coli.